Reading from the N-terminus, the 258-residue chain is Imidazole glycerol phosphate synthase subunit HisF (258 aa).

Catalysis depends on residues aspartate 11 and aspartate 130.

It belongs to the HisA/HisF family. As to quaternary structure, heterodimer of HisH and HisF.

Its subcellular location is the cytoplasm. It catalyses the reaction 5-[(5-phospho-1-deoxy-D-ribulos-1-ylimino)methylamino]-1-(5-phospho-beta-D-ribosyl)imidazole-4-carboxamide + L-glutamine = D-erythro-1-(imidazol-4-yl)glycerol 3-phosphate + 5-amino-1-(5-phospho-beta-D-ribosyl)imidazole-4-carboxamide + L-glutamate + H(+). It participates in amino-acid biosynthesis; L-histidine biosynthesis; L-histidine from 5-phospho-alpha-D-ribose 1-diphosphate: step 5/9. In terms of biological role, IGPS catalyzes the conversion of PRFAR and glutamine to IGP, AICAR and glutamate. The HisF subunit catalyzes the cyclization activity that produces IGP and AICAR from PRFAR using the ammonia provided by the HisH subunit. This Xanthomonas euvesicatoria pv. vesicatoria (strain 85-10) (Xanthomonas campestris pv. vesicatoria) protein is Imidazole glycerol phosphate synthase subunit HisF.